The chain runs to 127 residues: uncharacterized protein (127 aa).

It belongs to the transcriptional regulatory CopG/NikR family.

This is an uncharacterized protein from Methanocaldococcus jannaschii (strain ATCC 43067 / DSM 2661 / JAL-1 / JCM 10045 / NBRC 100440) (Methanococcus jannaschii).